We begin with the raw amino-acid sequence, 695 residues long: U1 snRNP-associated protein usp107 (695 aa).

Positions 85-96 are enriched in basic and acidic residues; it reads RDNESQQKDRKN. Residues 85–134 are disordered; it reads RDNESQQKDRKNLPRNQKSNEIQEKQTFQTPSSEKSTTERESRPFVPPNS. Over residues 98 to 113 the composition is skewed to polar residues; the sequence is PRNQKSNEIQEKQTFQ. The 83-residue stretch at 139–221 folds into the RRM domain; the sequence is RMLFIGNIPK…PSTRLSLITD (83 aa). The stretch at 265–369 forms a coiled coil; the sequence is DVRSRIERAA…NLLSKHRISR (105 aa). Basic and acidic residues-rich tracts occupy residues 487 to 506 and 548 to 561; these read EEDADALDRKEEERELRTRG and SERREFGLPERLLL. Disordered stretches follow at residues 487 to 509 and 540 to 590; these read EEDADALDRKEEERELRTRGEGA and QTKK…AEKT. Positions 605-695 constitute a PWI domain; sequence ESLWALPIDW…HVLLILRSEA (91 aa).

Component of the U1 snRNP particle, a subcomplex of the spliceosome. Interacts with prp5 and usp102.

Its subcellular location is the cytoplasm. The protein localises to the nucleus. In terms of biological role, component of the U1 snRNP particle, which recognizes and binds the 5'-splice site of pre-mRNA. Together with other non-snRNP factors, U1 snRNP forms the spliceosomal commitment complex, that targets pre-mRNA to the splicing pathway. The protein is U1 snRNP-associated protein usp107 (usp107) of Schizosaccharomyces pombe (strain 972 / ATCC 24843) (Fission yeast).